We begin with the raw amino-acid sequence, 246 residues long: Polyhedrin (246 aa).

Belongs to the polyhedrin family.

Its function is as follows. Major component of the virus occlusion bodies, which are large proteinaceous structures (polyhedra), that protect the virus from the outside environment for extended periods until they are ingested by insect larvae. This Lepidoptera (butterflies and moths) protein is Polyhedrin (PH).